The chain runs to 188 residues: Pro-FMRFamide-related neuropeptide VF (188 aa).

The first 26 residues, 1–26, serve as a signal peptide directing secretion; the sequence is MEIISLKRFILLTVATSSFLTSNTFC. Positions 27–57 are excised as a propeptide; the sequence is TDEFMMPHFHSKEGDGKYSQLRGIPKGEKER. A Phenylalanine amide modification is found at phenylalanine 94. The propeptide occupies 97–106; it reads TIDEKRSPAA. 2 disordered regions span residues 116–144 and 163–188; these read SHFPSLPQRFGRTTARSPKTPADLPQKPL and IQSPGGKRTRRGAFVETDDAERKPEK. Phenylalanine 125 is modified (phenylalanine amide). The propeptide occupies 128–188; it reads TTARSPKTPA…TDDAERKPEK (61 aa).

The protein belongs to the FARP (FMRFamide related peptide) family.

The protein localises to the secreted. Its function is as follows. Efficiently inhibits forskolin-induced production of cAMP. Acts as a potent negative regulator of gonadotropin synthesis and secretion. Induces secretion of prolactin. Functionally, efficiently inhibits forskolin-induced production of cAMP. Blocks morphine-induced analgesia. The chain is Pro-FMRFamide-related neuropeptide VF (Npvf) from Mus musculus (Mouse).